The following is a 179-amino-acid chain: Large ribosomal subunit protein uL5 (179 aa).

The protein belongs to the universal ribosomal protein uL5 family. Part of the 50S ribosomal subunit; part of the 5S rRNA/L5/L18/L25 subcomplex. Contacts the 5S rRNA and the P site tRNA. Forms a bridge to the 30S subunit in the 70S ribosome.

In terms of biological role, this is one of the proteins that bind and probably mediate the attachment of the 5S RNA into the large ribosomal subunit, where it forms part of the central protuberance. In the 70S ribosome it contacts protein S13 of the 30S subunit (bridge B1b), connecting the 2 subunits; this bridge is implicated in subunit movement. Contacts the P site tRNA; the 5S rRNA and some of its associated proteins might help stabilize positioning of ribosome-bound tRNAs. The protein is Large ribosomal subunit protein uL5 of Francisella tularensis subsp. novicida (strain U112).